The following is a 397-amino-acid chain: Glutamyl-tRNA reductase (397 aa).

Substrate-binding positions include 47-50 (TCGR), Ser98, 103-105 (ETD), and Gln109. Residue Cys48 is the Nucleophile of the active site. Position 177–182 (177–182 (GAGAVG)) interacts with NADP(+).

The protein belongs to the glutamyl-tRNA reductase family. Homodimer.

The enzyme catalyses (S)-4-amino-5-oxopentanoate + tRNA(Glu) + NADP(+) = L-glutamyl-tRNA(Glu) + NADPH + H(+). Its pathway is porphyrin-containing compound metabolism; protoporphyrin-IX biosynthesis; 5-aminolevulinate from L-glutamyl-tRNA(Glu): step 1/2. Functionally, catalyzes the NADPH-dependent reduction of glutamyl-tRNA(Glu) to glutamate 1-semialdehyde (GSA). In Pyrobaculum aerophilum (strain ATCC 51768 / DSM 7523 / JCM 9630 / CIP 104966 / NBRC 100827 / IM2), this protein is Glutamyl-tRNA reductase.